A 106-amino-acid polypeptide reads, in one-letter code: uncharacterized protein (106 aa).

A helical membrane pass occupies residues 85–101 (AVALVLLCVSHHLTYLP).

Its subcellular location is the membrane. This is an uncharacterized protein from Saccharomyces cerevisiae (strain ATCC 204508 / S288c) (Baker's yeast).